The chain runs to 343 residues: MQAIIDAEQSFKFPVLVGDIGGTNARFSILVDSNAEPKEFPVLQTADYATIDEAIQHAILDQTAIQPRSVILAVAGPVDGDEIDLTNCDWVVRPKKMIADLGFEDVTVLNDFEAQALAVVSLEGHHMEQIGGKPEEAVATRVVLGPGTGLGVAGLVCTRHAWVPVPGEGGHIDIGPRTERDYQIFPHIERIEGRVTGEQILSGRGLRNLYLGICAADKITPTLETPVDITSAGLDGSNPQAAETLDLFATYLGRLAGDLALIFMAHGGVYLSGGIPVRILSALKAGSFRAAFEDKAPNKAIMRDIPVRVITYQLAALTGLSAFARTPSRFEVSTEGRRWRMRR.

18 to 23 (GDIGGT) is an ATP binding site.

It belongs to the bacterial glucokinase family.

Its subcellular location is the cytoplasm. It carries out the reaction D-glucose + ATP = D-glucose 6-phosphate + ADP + H(+). In Brucella melitensis biotype 1 (strain ATCC 23456 / CCUG 17765 / NCTC 10094 / 16M), this protein is Glucokinase.